The primary structure comprises 227 residues: MSHTHFDLTALPQSARYKLLTATVVPRPIAWVGTRGSGETGKLGFNLAPYSFFGLMGSEPPVVAFAPGDRADGTPKDSALNIGSGGEFTVSLVSAALAAVMNLSATDFPRGMDEAQALGIQLAPGRRVQVPHVAAAPAALECREVQTVSIGRTRIILGEVLGLWLREDAVLDAEKHHVDTAALDLVGRMGGRGTYTHTRDTFELGRLTYAQWQEQWQAREEGDHSEK.

It belongs to the flavoredoxin family. FMN is required as a cofactor.

This is an uncharacterized protein from Deinococcus radiodurans (strain ATCC 13939 / DSM 20539 / JCM 16871 / CCUG 27074 / LMG 4051 / NBRC 15346 / NCIMB 9279 / VKM B-1422 / R1).